The chain runs to 443 residues: Ribosomal protein uS12 methylthiotransferase RimO (443 aa).

One can recognise an MTTase N-terminal domain in the interval 1 to 116; it reads MKFHLISLGC…IAEYVGKLIA (116 aa). Residues cysteine 10, cysteine 45, cysteine 79, cysteine 154, cysteine 158, and cysteine 161 each contribute to the [4Fe-4S] cluster site. One can recognise a Radical SAM core domain in the interval 140–370; sequence STPFFRAWVK…LELQQELSTE (231 aa). A TRAM domain is found at 373–441; it reads KKYVGTVQKV…QYDLVGGVVS (69 aa).

It belongs to the methylthiotransferase family. RimO subfamily. Requires [4Fe-4S] cluster as cofactor.

It is found in the cytoplasm. The catalysed reaction is L-aspartate(89)-[ribosomal protein uS12]-hydrogen + (sulfur carrier)-SH + AH2 + 2 S-adenosyl-L-methionine = 3-methylsulfanyl-L-aspartate(89)-[ribosomal protein uS12]-hydrogen + (sulfur carrier)-H + 5'-deoxyadenosine + L-methionine + A + S-adenosyl-L-homocysteine + 2 H(+). In terms of biological role, catalyzes the methylthiolation of an aspartic acid residue of ribosomal protein uS12. This Desulfotalea psychrophila (strain LSv54 / DSM 12343) protein is Ribosomal protein uS12 methylthiotransferase RimO.